The following is a 189-amino-acid chain: Protein Flattop (189 aa).

A disordered region spans residues 112–189 (EISGKPFDPD…PPPSPCKSTK (78 aa)). The segment covering 137-148 (APNPTIIPSSPV) has biased composition (polar residues). Positions 178–189 (NNPPPSPCKSTK) are enriched in pro residues.

It belongs to the Flattop family. In terms of assembly, microtubule inner protein component of sperm flagellar doublet microtubules. Interacts with DLG3. As to expression, expressed in mono- and multiciliated tissues during planar cell polarity acquisition.

It is found in the cytoplasm. Its subcellular location is the cytoskeleton. The protein localises to the cilium basal body. The protein resides in the cilium axoneme. It localises to the flagellum axoneme. It is found in the apical cell membrane. Functionally, microtubule inner protein (MIP) part of the dynein-decorated doublet microtubules (DMTs) in cilia axoneme. Acts as a regulator of cilium basal body docking and positioning in mono- and multiciliated cells. Regulates basal body docking and cilia formation in multiciliated lung cells. Regulates kinocilium positioning and stereocilia bundle morphogenesis in the inner ear. In Mus musculus (Mouse), this protein is Protein Flattop.